A 737-amino-acid polypeptide reads, in one-letter code: UPF0507 protein YML002W (737 aa).

Residues 1–83 (MDSHQLELPD…FEDFNKNTGN (83 aa)) form the VPS9 domain.

The protein belongs to the UPF0507 family.

The sequence is that of UPF0507 protein YML002W from Saccharomyces cerevisiae (strain ATCC 204508 / S288c) (Baker's yeast).